Here is a 151-residue protein sequence, read N- to C-terminus: NADPH-dependent 7-cyano-7-deazaguanine reductase (151 aa).

Cys-51 functions as the Thioimide intermediate in the catalytic mechanism. Asp-58 (proton donor) is an active-site residue. Residues 73–75 and 92–93 each bind substrate; these read VES and HE.

Belongs to the GTP cyclohydrolase I family. QueF type 1 subfamily.

The protein resides in the cytoplasm. The catalysed reaction is 7-aminomethyl-7-carbaguanine + 2 NADP(+) = 7-cyano-7-deazaguanine + 2 NADPH + 3 H(+). It functions in the pathway tRNA modification; tRNA-queuosine biosynthesis. Its function is as follows. Catalyzes the NADPH-dependent reduction of 7-cyano-7-deazaguanine (preQ0) to 7-aminomethyl-7-deazaguanine (preQ1). This chain is NADPH-dependent 7-cyano-7-deazaguanine reductase, found in Bacteroides thetaiotaomicron (strain ATCC 29148 / DSM 2079 / JCM 5827 / CCUG 10774 / NCTC 10582 / VPI-5482 / E50).